Reading from the N-terminus, the 75-residue chain is Small, acid-soluble spore protein Tlp (75 aa).

This sequence belongs to the Tlp family.

It localises to the spore core. In Geobacillus kaustophilus (strain HTA426), this protein is Small, acid-soluble spore protein Tlp.